A 462-amino-acid chain; its full sequence is Argininosuccinate lyase (462 aa).

The protein belongs to the lyase 1 family. Argininosuccinate lyase subfamily.

Its subcellular location is the cytoplasm. It catalyses the reaction 2-(N(omega)-L-arginino)succinate = fumarate + L-arginine. It participates in amino-acid biosynthesis; L-arginine biosynthesis; L-arginine from L-ornithine and carbamoyl phosphate: step 3/3. This is Argininosuccinate lyase from Bacillus cereus (strain AH820).